The primary structure comprises 552 residues: Mothers against decapentaplegic homolog 4 (552 aa).

Residues 1–322 are mediates interaction with ZBTB7A; sequence MDNMSITNTP…PISNHPAPEY (322 aa). The MH1 domain occupies 18 to 142; sequence SIVHSLMCHR…YERVVSPGID (125 aa). Lysine 37 bears the N6-acetyllysine mark. The segment at 44–69 is required for interaction with TSC22D1; sequence VKKLKEKKDELDSLITAITTNGAHPS. Cysteine 71 contributes to the Zn(2+) binding site. A Glycyl lysine isopeptide (Lys-Gly) (interchain with G-Cter in SUMO2) cross-link involves residue lysine 113. Zn(2+)-binding residues include cysteine 115, cysteine 127, and histidine 132. Residues 264 to 297 are disordered; the sequence is STTTWTGSRTAPYPPNLPHHQNGHLQHHPPMPPH. An SAD region spans residues 275–320; that stretch reads PYPPNLPHHQNGHLQHHPPMPPHPGHYWPVHNELAFQPPISNHPAP. Residues 323–552 enclose the MH2 domain; sequence WCSIAYFEMD…MPIADPQPLD (230 aa). N6-acetyllysine occurs at positions 428 and 507. Lysine 519 participates in a covalent cross-link: Glycyl lysine isopeptide (Lys-Gly) (interchain with G-Cter in ubiquitin).

This sequence belongs to the dwarfin/SMAD family. As to quaternary structure, monomer; in the absence of TGF-beta activation. Heterotrimer; on TGF-beta activation. Heterotrimer composed of two molecules of a C-terminally phosphorylated R-SMAD molecule, SMAD2 or SMAD3, and one molecule of SMAD4 to form the transcriptional active SMAD2/SMAD3-SMAD4 complex. Found in a ternary complex composed of SMAD4, STK11/LKB1 and STK11IP. Found in a complex with SMAD1 and YY1. Identified in a complex that contains at least ZNF451, SMAD2, SMAD3 and SMAD4. Interacts with ATF2, COPS5, DACH1, MSG1, SKI, STK11/LKB1, STK11IP and TRIM33. Associates with ZNF423 or ZNF521 in response to BMP2 leading to activate transcription of BMP target genes. Interacts with USP9X. Interacts with RBPMS. Interacts with WWTR1 (via coiled-coil domain). Interacts with CITED1 and CITED2. Interacts with PDPK1 (via PH domain). Interacts with VPS39; this interaction affects heterodimer formation with SMAD3, but not with SMAD2, and leads to inhibition of SMAD3-dependent transcription activation. Interactions with VPS39 and SMAD2 may be mutually exclusive. Interacts (via MH2 domain) with ZNF451 (via N-terminal zinc-finger domains). Interacts with ZC3H3. Interacts weakly with ZNF8. Interacts with NUP93 and IPO7; translocates SMAD4 to the nucleus through the NPC upon BMP7 stimulation resulting in activation of SMAD4 signaling. Interacts with CREB3L1, the interaction takes place upon TGFB1 induction and SMAD4 acts as a CREB3L1 coactivator to induce the expression of genes involved in the assembly of collagen extracellular matrix. Interacts with DLX1. Interacts with ZBTB7A; the interaction is direct and stimulated by TGFB1. Interacts with CREBBP; the recruitment of this transcriptional coactivator is negatively regulated by ZBTB7A. Interacts with EP300; the interaction with this transcriptional coactivator is negatively regulated by ZBTB7A. Interacts with HDAC1. Interacts (via MH2 domain) with ZMIZ1 (via SP-RING-type domain); in the TGF-beta signaling pathway increases the activity of the SMAD3/SMAD4 transcriptional complex. Interacts (via N-terminus) with TSC22D1. In terms of processing, phosphorylated by PDPK1. Post-translationally, monoubiquitinated on Lys-519 by E3 ubiquitin-protein ligase TRIM33. Monoubiquitination hampers its ability to form a stable complex with activated SMAD2/3 resulting in inhibition of TGF-beta/BMP signaling cascade. Deubiquitination by USP9X restores its competence to mediate TGF-beta signaling.

The protein localises to the cytoplasm. It is found in the nucleus. Its function is as follows. Common SMAD (co-SMAD) is the coactivator and mediator of signal transduction by TGF-beta (transforming growth factor). Component of the heterotrimeric SMAD2/SMAD3-SMAD4 complex that forms in the nucleus and is required for the TGF-mediated signaling. Promotes binding of the SMAD2/SMAD4/FAST-1 complex to DNA and provides an activation function required for SMAD1 or SMAD2 to stimulate transcription. Component of the multimeric SMAD3/SMAD4/JUN/FOS complex which forms at the AP1 promoter site; required for synergistic transcriptional activity in response to TGF-beta. Acts synergistically with SMAD1 and YY1 in bone morphogenetic protein (BMP)-mediated cardiac-specific gene expression. Binds to SMAD binding elements (SBEs) (5'-GTCT/AGAC-3') within BMP response element (BMPRE) of cardiac activating regions. May act as a tumor suppressor. Positively regulates PDPK1 kinase activity by stimulating its dissociation from the 14-3-3 protein YWHAQ which acts as a negative regulator. In muscle physiology, plays a central role in the balance between atrophy and hypertrophy. When recruited by MSTN, promotes atrophy response via phosphorylated SMAD2/4. MSTN decrease causes SMAD4 release and subsequent recruitment by the BMP pathway to promote hypertrophy via phosphorylated SMAD1/5/8. The chain is Mothers against decapentaplegic homolog 4 (SMAD4) from Sus scrofa (Pig).